The primary structure comprises 377 residues: MLYQFIFHTLLRRVDAERAHRVSFAGLRALAAVPGTTRLMRRVLGPREPELRVRVFGREFPGPLGLAAGFDKNARGVAALTALGFSHVEIGTVTGQPQPGNPRPRLFRLVADRAIVNRMGFNNEGSQAVSERLRAHRARRARDLIVGVNIGKTKVVPDSDAVADYVTSARRFADLADYLVVNVSSPNTPGLRDLQATERLRPLLSAVRRTLDEAGRPDLPLLVKIAPDLADEDIDAVADLAVELGLDGIIATNTTVSRDGLATDPEEVAALGAGGLSGAPLKERALQVLRRLRARVGDRLVLIAVGGIETPEDAWARIRAGATLVQGYTGLIYGGPLWPRRIHRGVAALARRDGFASIAEAVGVDVDPSAKPSTASS.

FMN-binding positions include 68–72 (AGFDK) and Thr92. Substrate is bound at residue Lys72. A substrate-binding site is contributed by 117 to 121 (NRMGF). The FMN site is built by Asn149 and Asn182. Asn182 lines the substrate pocket. The active-site Nucleophile is the Ser185. Asn187 provides a ligand contact to substrate. FMN is bound by residues Lys224 and Thr252. 253 to 254 (NT) serves as a coordination point for substrate. FMN-binding positions include Gly278, Gly307, and 328–329 (YT).

Belongs to the dihydroorotate dehydrogenase family. Type 2 subfamily. As to quaternary structure, monomer. Requires FMN as cofactor.

The protein resides in the cell membrane. The catalysed reaction is (S)-dihydroorotate + a quinone = orotate + a quinol. It participates in pyrimidine metabolism; UMP biosynthesis via de novo pathway; orotate from (S)-dihydroorotate (quinone route): step 1/1. Functionally, catalyzes the conversion of dihydroorotate to orotate with quinone as electron acceptor. This Thermobifida fusca (strain YX) protein is Dihydroorotate dehydrogenase (quinone).